We begin with the raw amino-acid sequence, 114 residues long: Chaperonin GroEL (114 aa).

Asp22 to Thr26 serves as a coordination point for ATP.

The protein belongs to the chaperonin (HSP60) family. Forms a cylinder of 14 subunits composed of two heptameric rings stacked back-to-back. Interacts with the co-chaperonin GroES.

It is found in the cytoplasm. It carries out the reaction ATP + H2O + a folded polypeptide = ADP + phosphate + an unfolded polypeptide.. Together with its co-chaperonin GroES, plays an essential role in assisting protein folding. The GroEL-GroES system forms a nano-cage that allows encapsulation of the non-native substrate proteins and provides a physical environment optimized to promote and accelerate protein folding. This chain is Chaperonin GroEL, found in Mycobacterium ulcerans.